The sequence spans 199 residues: Alpha-D-glucose 1-phosphate phosphatase YihX (199 aa).

Asp-6 serves as the catalytic Nucleophile. Asp-6 contacts Mg(2+). Substrate contacts are provided by residues 6–8 (DLG), 107–108 (SN), Lys-141, and Asp-166. Residue Asp-166 coordinates Mg(2+).

Belongs to the HAD-like hydrolase superfamily. YihX family. Requires Mg(2+) as cofactor. It depends on Mn(2+) as a cofactor. Co(2+) is required as a cofactor. Zn(2+) serves as cofactor.

It catalyses the reaction alpha-D-glucose 1-phosphate + H2O = D-glucose + phosphate. In terms of biological role, catalyzes the dephosphorylation of alpha-D-glucose 1-phosphate (Glc1P) and, to a lesser extent, of other sugar phosphates. Has no activity with the beta form of Glc1P. In addition, YihX has significant phosphatase activity against pyridoxal phosphate (PLP) and low beta-phosphoglucomutase activity. In Escherichia coli (strain K12), this protein is Alpha-D-glucose 1-phosphate phosphatase YihX (yihX).